The following is a 201-amino-acid chain: Beta-lactamase inhibitory protein (201 aa).

An N-terminal signal peptide occupies residues 1–36 (MRTVGIGAGVRRLGRAVVMAAAVGGLVLGSAGASNA). A run of 2 repeats spans residues 37 to 112 (AGVM…EKLL) and 116 to 201 (APTL…WDLV). Intrachain disulfides connect cysteine 66–cysteine 78 and cysteine 145–cysteine 167.

Interacts with E.coli beta-lactamase TEM-1; interaction inhibits hydrolysis of beta-lactam antibiotics. Interacts with K.pneumoniae beta-lactamase SHV-1. Interacts with K.pneumoniae beta-lactamases KPC-2 and KPC-3; interaction inhibits hydrolysis of beta-lactam antibiotics. Interacts with E.coli beta-lactamases CTX-M-14 and CTX-M-15; interaction inhibits hydrolysis of beta-lactam antibiotics.

The protein resides in the secreted. Inhibits a wide variety of beta lactamases. This Streptomyces clavuligerus protein is Beta-lactamase inhibitory protein.